The primary structure comprises 193 residues: dTTP/UTP pyrophosphatase (193 aa).

The active-site Proton acceptor is Asp75.

Belongs to the Maf family. YhdE subfamily. A divalent metal cation serves as cofactor.

It localises to the cytoplasm. It catalyses the reaction dTTP + H2O = dTMP + diphosphate + H(+). The enzyme catalyses UTP + H2O = UMP + diphosphate + H(+). Its function is as follows. Nucleoside triphosphate pyrophosphatase that hydrolyzes dTTP and UTP. May have a dual role in cell division arrest and in preventing the incorporation of modified nucleotides into cellular nucleic acids. This chain is dTTP/UTP pyrophosphatase, found in Koribacter versatilis (strain Ellin345).